The primary structure comprises 330 residues: Ketol-acid reductoisomerase (NADP(+)) (330 aa).

Residues 3 to 184 (LPVYYDKDID…GGGRMGVLET (182 aa)) enclose the KARI N-terminal Rossmann domain. NADP(+) is bound by residues 26 to 29 (YGAQ), Ser-52, and Ser-54. Residue His-109 is part of the active site. Residue Gly-135 coordinates NADP(+). Residues 185-329 (SFKEECESDL…EILRAPFNHK (145 aa)) enclose the KARI C-terminal knotted domain. 4 residues coordinate Mg(2+): Asp-193, Glu-197, Glu-229, and Glu-233. Ser-254 lines the substrate pocket.

This sequence belongs to the ketol-acid reductoisomerase family. It depends on Mg(2+) as a cofactor.

It carries out the reaction (2R)-2,3-dihydroxy-3-methylbutanoate + NADP(+) = (2S)-2-acetolactate + NADPH + H(+). It catalyses the reaction (2R,3R)-2,3-dihydroxy-3-methylpentanoate + NADP(+) = (S)-2-ethyl-2-hydroxy-3-oxobutanoate + NADPH + H(+). It participates in amino-acid biosynthesis; L-isoleucine biosynthesis; L-isoleucine from 2-oxobutanoate: step 2/4. Its pathway is amino-acid biosynthesis; L-valine biosynthesis; L-valine from pyruvate: step 2/4. Functionally, involved in the biosynthesis of branched-chain amino acids (BCAA). Catalyzes an alkyl-migration followed by a ketol-acid reduction of (S)-2-acetolactate (S2AL) to yield (R)-2,3-dihydroxy-isovalerate. In the isomerase reaction, S2AL is rearranged via a Mg-dependent methyl migration to produce 3-hydroxy-3-methyl-2-ketobutyrate (HMKB). In the reductase reaction, this 2-ketoacid undergoes a metal-dependent reduction by NADPH to yield (R)-2,3-dihydroxy-isovalerate. This chain is Ketol-acid reductoisomerase (NADP(+)), found in Helicobacter pylori (strain Shi470).